The chain runs to 450 residues: Sorting nexin-4 (450 aa).

An N-acetylmethionine modification is found at methionine 1. The tract at residues methionine 1–aspartate 46 is disordered. Low complexity predominate over residues leucine 11–leucine 20. Positions serine 61–tryptophan 187 constitute a PX domain. Arginine 106, serine 108, lysine 132, and arginine 154 together coordinate a 1,2-diacyl-sn-glycero-3-phospho-(1D-myo-inositol-3-phosphate).

Belongs to the sorting nexin family. As to quaternary structure, heterodimer; heterodimerizes with SNX7 or SNX30. Interacts with WWC1/KIBRA. Identified in a complex with WWC1/KIBRA and dynein components DYNLL1 and DYNC1I2. Interacts with BIN1.

It localises to the early endosome. It is found in the early endosome membrane. Involved in the regulation of endocytosis and in several stages of intracellular trafficking. Plays a role in recycling endocytosed transferrin receptor and prevent its degradation. Involved in autophagosome assembly by regulating trafficking and recycling of phospholipid scramblase ATG9A. This chain is Sorting nexin-4, found in Mus musculus (Mouse).